We begin with the raw amino-acid sequence, 342 residues long: Autoinducer 2 import system permease protein LsrC (342 aa).

Topologically, residues 1-13 are periplasmic; sequence MLKFIQNNREITA. A helical transmembrane segment spans residues 14–34; sequence LLAVVLLFVLPGFLDRQYLSV. At 35-38 the chain is on the cytoplasmic side; it reads QTLT. A helical membrane pass occupies residues 39-59; sequence MVYSSAQILILLAMGATLVML. Over 60 to 69 the chain is Periplasmic; sequence TRNIDVSVGS. The chain crosses the membrane as a helical span at residues 70 to 90; that stretch reads ITGMCAVLLGMLLNAGYSLPV. The Cytoplasmic portion of the chain corresponds to 91-92; sequence AC. The chain crosses the membrane as a helical span at residues 93–113; the sequence is VATLLLGLLAGFFNGVLVAWL. Residue Lys-114 is a topological domain, periplasmic. A helical transmembrane segment spans residues 115–135; it reads IPAIVATLGTLGLYRGIMLLW. The Cytoplasmic segment spans residues 136 to 154; that stretch reads TGGKWIEGLPAELKQLSAP. A helical transmembrane segment spans residues 155–175; it reads LLLGVSAIGWLTIILVAFMAW. The Periplasmic segment spans residues 176 to 212; that stretch reads LLAKTAFGRSFYATGDNLQGARQLGVRTEAIRIVAFS. A helical transmembrane segment spans residues 213 to 233; the sequence is LNGCMAALAGIVFASQIGFIP. Residues 234 to 251 are Cytoplasmic-facing; the sequence is NQTGTGLEMKAIAACVLG. The helical transmembrane segment at 252–272 threads the bilayer; the sequence is GISLLGGSGAIIGAVLGAWFL. Residues 273–283 lie on the Periplasmic side of the membrane; it reads TQIDSVLVLLR. The chain crosses the membrane as a helical span at residues 284 to 304; the sequence is IPAWWNDFIAGLVLLAVLVFD. At 305-342 the chain is on the cytoplasmic side; sequence GRLRCALERNLRRQKYARFMTPPPSVKPASSGKKREAA.

This sequence belongs to the binding-protein-dependent transport system permease family. AraH/RbsC subfamily. In terms of assembly, the complex is composed of two ATP-binding proteins (LsrA), two transmembrane proteins (LsrC and LsrD) and a solute-binding protein (LsrB).

It is found in the cell inner membrane. Functionally, part of the ABC transporter complex LsrABCD involved in autoinducer 2 (AI-2) import. Probably responsible for the translocation of the substrate across the membrane. The chain is Autoinducer 2 import system permease protein LsrC (lsrC) from Escherichia coli (strain K12 / DH10B).